The primary structure comprises 427 residues: Glutamate-1-semialdehyde 2,1-aminomutase (427 aa).

K265 carries the N6-(pyridoxal phosphate)lysine modification.

The protein belongs to the class-III pyridoxal-phosphate-dependent aminotransferase family. HemL subfamily. In terms of assembly, homodimer. Pyridoxal 5'-phosphate is required as a cofactor.

The protein resides in the cytoplasm. It catalyses the reaction (S)-4-amino-5-oxopentanoate = 5-aminolevulinate. Its pathway is porphyrin-containing compound metabolism; protoporphyrin-IX biosynthesis; 5-aminolevulinate from L-glutamyl-tRNA(Glu): step 2/2. The sequence is that of Glutamate-1-semialdehyde 2,1-aminomutase from Neisseria meningitidis serogroup C / serotype 2a (strain ATCC 700532 / DSM 15464 / FAM18).